A 57-amino-acid chain; its full sequence is MAVPKKKTSKGKRNQRHAVWKAKAGDAAQKALSLGKSILSGRAQGFVYPIQEEDSEE.

Positions 1 to 20 are enriched in basic residues; that stretch reads MAVPKKKTSKGKRNQRHAVW. The tract at residues 1-23 is disordered; it reads MAVPKKKTSKGKRNQRHAVWKAK.

It belongs to the bacterial ribosomal protein bL32 family.

The protein is Large ribosomal subunit protein bL32 of Prochlorococcus marinus (strain SARG / CCMP1375 / SS120).